We begin with the raw amino-acid sequence, 402 residues long: 1-deoxy-D-xylulose 5-phosphate reductoisomerase (402 aa).

Threonine 13, glycine 14, serine 15, isoleucine 16, and asparagine 126 together coordinate NADPH. Position 127 (lysine 127) interacts with 1-deoxy-D-xylulose 5-phosphate. Glutamate 128 contacts NADPH. Position 152 (aspartate 152) interacts with Mn(2+). 1-deoxy-D-xylulose 5-phosphate contacts are provided by serine 153, glutamate 154, serine 188, and histidine 211. A Mn(2+)-binding site is contributed by glutamate 154. Glycine 217 provides a ligand contact to NADPH. Positions 224, 229, 230, and 233 each coordinate 1-deoxy-D-xylulose 5-phosphate. Glutamate 233 is a Mn(2+) binding site.

Belongs to the DXR family. Requires Mg(2+) as cofactor. It depends on Mn(2+) as a cofactor.

The enzyme catalyses 2-C-methyl-D-erythritol 4-phosphate + NADP(+) = 1-deoxy-D-xylulose 5-phosphate + NADPH + H(+). Its pathway is isoprenoid biosynthesis; isopentenyl diphosphate biosynthesis via DXP pathway; isopentenyl diphosphate from 1-deoxy-D-xylulose 5-phosphate: step 1/6. In terms of biological role, catalyzes the NADPH-dependent rearrangement and reduction of 1-deoxy-D-xylulose-5-phosphate (DXP) to 2-C-methyl-D-erythritol 4-phosphate (MEP). The polypeptide is 1-deoxy-D-xylulose 5-phosphate reductoisomerase (Psychrobacter arcticus (strain DSM 17307 / VKM B-2377 / 273-4)).